The chain runs to 343 residues: MTETADLWPQLLGQLLDRQSLSEAQAEQLMNGWLQNQVPDVVSGAILAALQAKGVSAGELAGMARVLQRASLGSPLDLSLLVDTCGTGGDGAGTFNISTAVAFVVSAAGIPVVKHGNRSASGKVGSADVLEALGVNLGAEPERVRAAVAEVGITFLFAPQWHPAMRAVIPYRRALKVRTIFNLLGPLVNPLYPNRQVIGVYAQELVPVMAEALRLLGREGAIVLHSREGLDEAGLDQPTDLGILSGGLVRTEVLNPADYELTLAPTQALKGGDVAENAAILTQVLQGSGTPAQQDVVALNAALALQVAGVAPDWRAGIAQAREILARGAAWDRLQQLVHFLKA.

Residues glycine 86, glycine 89–aspartate 90, threonine 94, asparagine 96–threonine 99, lysine 114–glycine 122, and serine 126 each bind 5-phospho-alpha-D-ribose 1-diphosphate. Residue glycine 86 participates in anthranilate binding. Mg(2+) is bound at residue serine 98. Position 117 (asparagine 117) interacts with anthranilate. Arginine 172 provides a ligand contact to anthranilate. Aspartate 231 and glutamate 232 together coordinate Mg(2+).

Belongs to the anthranilate phosphoribosyltransferase family. In terms of assembly, homodimer. Mg(2+) is required as a cofactor.

It carries out the reaction N-(5-phospho-beta-D-ribosyl)anthranilate + diphosphate = 5-phospho-alpha-D-ribose 1-diphosphate + anthranilate. It participates in amino-acid biosynthesis; L-tryptophan biosynthesis; L-tryptophan from chorismate: step 2/5. Its function is as follows. Catalyzes the transfer of the phosphoribosyl group of 5-phosphorylribose-1-pyrophosphate (PRPP) to anthranilate to yield N-(5'-phosphoribosyl)-anthranilate (PRA). The sequence is that of Anthranilate phosphoribosyltransferase from Synechococcus sp. (strain JA-2-3B'a(2-13)) (Cyanobacteria bacterium Yellowstone B-Prime).